The sequence spans 615 residues: uncharacterized protein (615 aa).

Position 48 is a phosphoserine (Ser-48). Positions 424–433 (DRENELEEGS) are enriched in acidic residues. The tract at residues 424 to 615 (DRENELEEGS…YARKKTKKNV (192 aa)) is disordered. 4 stretches are compositionally biased toward basic and acidic residues: residues 439 to 476 (DNER…KEVG), 484 to 496 (DGNK…KEVA), 504 to 521 (ESEK…KEVA), and 529 to 561 (ESEK…EPSK). Basic residues-rich tracts occupy residues 579-589 (KKPKVVKKVAK) and 606-615 (YARKKTKKNV).

This is an uncharacterized protein from Arabidopsis thaliana (Mouse-ear cress).